The primary structure comprises 354 residues: Uroporphyrinogen decarboxylase (354 aa).

Substrate-binding positions include 27–31, F46, D77, Y154, S209, and H327; that span reads RQAGR.

Belongs to the uroporphyrinogen decarboxylase family. In terms of assembly, homodimer.

The protein localises to the cytoplasm. The catalysed reaction is uroporphyrinogen III + 4 H(+) = coproporphyrinogen III + 4 CO2. Its pathway is porphyrin-containing compound metabolism; protoporphyrin-IX biosynthesis; coproporphyrinogen-III from 5-aminolevulinate: step 4/4. In terms of biological role, catalyzes the decarboxylation of four acetate groups of uroporphyrinogen-III to yield coproporphyrinogen-III. This Pseudomonas syringae pv. tomato (strain ATCC BAA-871 / DC3000) protein is Uroporphyrinogen decarboxylase.